A 107-amino-acid polypeptide reads, in one-letter code: UPF0145 protein BT_3410 (107 aa).

This sequence belongs to the UPF0145 family.

The protein is UPF0145 protein BT_3410 of Bacteroides thetaiotaomicron (strain ATCC 29148 / DSM 2079 / JCM 5827 / CCUG 10774 / NCTC 10582 / VPI-5482 / E50).